Consider the following 457-residue polypeptide: Serine/threonine-protein phosphatase 2A activator 2 (457 aa).

2 disordered regions span residues 387–407 (DAHG…GEGQ) and 426–457 (AEQE…IPFD). Residues 391–400 (HIHPAGKPHA) are compositionally biased toward basic residues.

It belongs to the PTPA-type PPIase family.

The protein resides in the cytoplasm. It carries out the reaction [protein]-peptidylproline (omega=180) = [protein]-peptidylproline (omega=0). In terms of biological role, PPIases accelerate the folding of proteins. It catalyzes the cis-trans isomerization of proline imidic peptide bonds in oligopeptides. Acts as a regulatory subunit for PP2A-like phosphatases modulating their activity or substrate specificity, probably by inducing a conformational change in the catalytic subunit, a direct target of the PPIase. Can reactivate inactive phosphatase PP2A-phosphatase methylesterase complexes (PP2Ai) in presence of ATP and Mg(2+) by dissociating the inactive form from the complex. In Mycosarcoma maydis (Corn smut fungus), this protein is Serine/threonine-protein phosphatase 2A activator 2 (RRD2).